The following is a 234-amino-acid chain: Dienlactone hydrolase 2 (234 aa).

Catalysis depends on residues Cys-143, Asp-167, and His-199.

This sequence belongs to the dienelactone hydrolase family.

Its pathway is xenobiotic degradation. Its function is as follows. Dienlactone hydrolase; part of the Fusarium detoxification of benzoxazolinone cluster 2 (FDB2) involved in the degradation of benzoxazolinones produced by the host plant. Maize, wheat, and rye produce the 2 benzoxazinone phytoanticipins 2,4-dihy-droxy-7-methoxy-1,4-benzoxazin-3-one (DIMBOA) and 2,4-dihydroxy-1,4-benzoxazin-3-one (DIBOA) that, due to their inherent instability once released, spontaneously degrade to the more stable corresponding benzoxazolinones, 6-methoxy-2-benzoxazolinone (MBOA) and 2-benzoxazolinone (BOA), respectively. The first step in the detoxification of benzoxazolinones involves the hydrolysis of the cyclic ester bond of benzoxazolinones by the FDB1 cluster gamma-lactamase MBL1 to aminophenols. MBL1 is able to convert BOA into 2-aminophenol (2-AP), as well as MBOA into 5-methoxy-2-aminophenol (2-AMP). The FDB2 cluster N-malonyltransferase FDB2/NAT1 then metabolizes aminophenols via N-malonylation to non-toxic malonamic acids. FDB2/NAT1 converts 2-AP into N-(2-hydroxyphenyl) malonamic acid (HPMA) and 2-AMP into N-(2-hydroxy-4-methoxyphenyl) malonamic acid (HMPMA). The duplicated dienlactone hydrolases DLH1 and DLH2 may provide redundant function for hydrolyzing the lactone moiety in the BOA molecule. The roles of the amidases and other enzymes encoded by the 2 FDB clusters have not been identified so far. In Gibberella moniliformis (strain M3125 / FGSC 7600) (Maize ear and stalk rot fungus), this protein is Dienlactone hydrolase 2.